The following is a 238-amino-acid chain: Large ribosomal subunit protein uL2 (238 aa).

Residues 203–223 (GGGAWKHPGKPTTVSRNAPPG) form a disordered region.

It belongs to the universal ribosomal protein uL2 family. As to quaternary structure, part of the 50S ribosomal subunit. Forms a bridge to the 30S subunit in the 70S ribosome.

One of the primary rRNA binding proteins. Required for association of the 30S and 50S subunits to form the 70S ribosome, for tRNA binding and peptide bond formation. It has been suggested to have peptidyltransferase activity; this is somewhat controversial. Makes several contacts with the 16S rRNA in the 70S ribosome. The polypeptide is Large ribosomal subunit protein uL2 (Methanosarcina barkeri (strain Fusaro / DSM 804)).